We begin with the raw amino-acid sequence, 337 residues long: Oxidoreductase andH (337 aa).

This sequence belongs to the NmrA-type oxidoreductase family.

It functions in the pathway secondary metabolite biosynthesis; terpenoid biosynthesis. In terms of biological role, oxidoreductase; part of the gene cluster that mediates the biosynthesis of anditomin, a fungal meroterpenoid. The first step of the pathway is the synthesis of 3,5-dimethylorsellinic acid (DMOA) by the polyketide synthase andM. DMOA is then converted to the phthalide compound 5,7-dihydroxy-4,6-dimethylphthalide (DHDMP) by the cytochrome P450 monooxygenase andK, which is further prenylated by the prenyltransferase andD to yield farnesyl-DHDMP. Further epoxidation by the FAD-dependent monooxygenase andE leads to epoxyfarnesyl-DHDMP. The next step involves the terpene cyclase andB that converts epoxyfarnesyl-DHDMP into preandiloid A through opening of the epoxide ring followed by the cyclization of the farnesyl moiety. Preandiloid A is in turn oxidized at the C-3 hydroxyl group to yield preandiloid B by the dehydrogenase andC. The dioxygenase andA is solely responsible for the dehydrogenation of preandiloid B leading to the enone preandiloid C, as well as for the intriguing structural rearrangement to generate the bicyclo[2.2.2]octane core, transforming preandiloid C into andiconin. FAD-binding monooxygenase andJ then produces andilesin D which is reduced by dehydrogenase andI to yield andilesin A. Action of acetyltransferase andG followed by a spontaneous acetate elimination leads then to andilesin B, which is in turn substrate of the short chain dehydrogenase andH to yield andilesin C. Finally, the dioxygenase andF catalyzes the transformation of andilesin C to anditomin. The chain is Oxidoreductase andH from Emericella variicolor (Aspergillus stellatus).